The chain runs to 289 residues: Probable acetolactate synthase small subunit (289 aa).

S34 carries the post-translational modification Phosphoserine. The region spanning 72-149 is the ACT domain; it reads VFNCLVQNEP…AVLDYTGTSM (78 aa).

The protein belongs to the acetolactate synthase small subunit family.

It localises to the cytoplasm. It participates in amino-acid biosynthesis; L-isoleucine biosynthesis; L-isoleucine from 2-oxobutanoate: step 1/4. It functions in the pathway amino-acid biosynthesis; L-valine biosynthesis; L-valine from pyruvate: step 1/4. Stimulates activity of the acetolactate synthase catalytic subunit ilv1. The polypeptide is Probable acetolactate synthase small subunit (Schizosaccharomyces pombe (strain 972 / ATCC 24843) (Fission yeast)).